A 216-amino-acid polypeptide reads, in one-letter code: Pyrrolidone-carboxylate peptidase (216 aa).

Catalysis depends on residues E80, C143, and H168.

This sequence belongs to the peptidase C15 family. As to quaternary structure, homotetramer.

The protein localises to the cytoplasm. It catalyses the reaction Release of an N-terminal pyroglutamyl group from a polypeptide, the second amino acid generally not being Pro.. Its function is as follows. Removes 5-oxoproline from various penultimate amino acid residues except L-proline. The chain is Pyrrolidone-carboxylate peptidase from Cupriavidus taiwanensis (strain DSM 17343 / BCRC 17206 / CCUG 44338 / CIP 107171 / LMG 19424 / R1) (Ralstonia taiwanensis (strain LMG 19424)).